A 505-amino-acid polypeptide reads, in one-letter code: Sucrose porin (505 aa).

The N-terminal stretch at 1-22 (MYRKSTLAMLIALLTSAASAHA) is a signal peptide. Residues 44–87 (ENRAQTAENRAGAAEKKVQQLTAQQQKNQNSTQEVAQRTARLEK) form a disordered region. The span at 62 to 72 (QQLTAQQQKNQ) shows a compositional bias: low complexity.

Belongs to the porin LamB (TC 1.B.3) family. Homotrimer.

The protein resides in the cell outer membrane. In terms of biological role, porin for sucrose uptake. The polypeptide is Sucrose porin (scrY) (Salmonella typhimurium).